Consider the following 657-residue polypeptide: Glycogen debranching enzyme (657 aa).

Asp-336 serves as the catalytic Nucleophile. Catalysis depends on Glu-371, which acts as the Proton donor. The disordered stretch occupies residues 460–479; that stretch reads ANGEENRDGTNNNYSNNHGK.

The protein belongs to the glycosyl hydrolase 13 family.

It carries out the reaction Hydrolysis of (1-&gt;6)-alpha-D-glucosidic linkages to branches with degrees of polymerization of three or four glucose residues in limit dextrin.. It functions in the pathway glycan degradation; glycogen degradation. Functionally, removes maltotriose and maltotetraose chains that are attached by 1,6-alpha-linkage to the limit dextrin main chain, generating a debranched limit dextrin. This is Glycogen debranching enzyme from Escherichia coli (strain UTI89 / UPEC).